We begin with the raw amino-acid sequence, 210 residues long: Large ribosomal subunit protein uL3 (210 aa).

The tract at residues 125–154 is disordered; sequence RHGFRGGPKTHGQSDRHRAPGSIGAGTTPG.

The protein belongs to the universal ribosomal protein uL3 family. In terms of assembly, part of the 50S ribosomal subunit. Forms a cluster with proteins L14 and L19.

Its function is as follows. One of the primary rRNA binding proteins, it binds directly near the 3'-end of the 23S rRNA, where it nucleates assembly of the 50S subunit. This Chloroflexus aggregans (strain MD-66 / DSM 9485) protein is Large ribosomal subunit protein uL3.